The primary structure comprises 355 residues: Guanine nucleotide-binding protein subunit alpha-14 (355 aa).

A G-alpha domain is found at 34 to 355; that stretch reads RELKLLLLGT…QLNLREFNLV (322 aa). The interval 37–50 is G1 motif; sequence KLLLLGTGESGKST. GTP is bound by residues 42–49, 176–182, 201–205, 270–273, and A327; these read GTGESGKS, LRVRVPT, DVGGQ, and NKKD. Residues S49 and T182 each contribute to the Mg(2+) site. The G2 motif stretch occupies residues 174 to 182; it reads DVLRVRVPT. Positions 197–206 are G3 motif; sequence FRMVDVGGQR. The segment at 266-273 is G4 motif; that stretch reads ILFLNKKD. The tract at residues 325–330 is G5 motif; that stretch reads TCATDT.

Belongs to the G-alpha family. G(q) subfamily. As to quaternary structure, g proteins are composed of 3 units; alpha, beta and gamma. The alpha chain contains the guanine nucleotide binding site.

Guanine nucleotide-binding proteins (G proteins) are involved as modulators or transducers in various transmembrane signaling systems. The sequence is that of Guanine nucleotide-binding protein subunit alpha-14 (GNA14) from Bos taurus (Bovine).